The primary structure comprises 677 residues: Secretogranin-1 (677 aa).

An N-terminal signal peptide occupies residues Met-1–Ser-20. A disulfide bond links Cys-36 and Cys-57. Basic and acidic residues-rich tracts occupy residues Ser-64–Ser-100 and Ala-118–Glu-136. Positions Ser-64–Ala-463 are disordered. A Phosphothreonine modification is found at Thr-79. Ser-93, Ser-99, and Ser-100 each carry phosphoserine. An O-linked (Xyl...) (chondroitin sulfate) serine glycan is attached at Ser-93. The interval Thr-116–Thr-120 is O-glycosylated at one site. Position 130 is a phosphoserine; by FAM20C (Ser-130). Ser-149 carries the post-translational modification Phosphoserine. Basic and acidic residues-rich tracts occupy residues Glu-150–Arg-162, Asn-172–Glu-190, and Asn-200–Ser-236. Phosphoserine is present on Ser-183. Ser-225 carries the phosphoserine; by FAM20C modification. Ser-239 carries O-linked (Xyl...) (chondroitin sulfate) serine glycosylation. Phosphoserine occurs at positions 259 and 263. The segment covering Glu-262 to Ser-272 has biased composition (acidic residues). Residues Arg-277–Arg-287 are compositionally biased toward basic residues. Residues Ser-293, Ser-294, Ser-311, and Ser-335 each carry the phosphoserine modification. Tyr-341 bears the Sulfotyrosine mark. Positions Trp-359–Ala-372 are enriched in basic and acidic residues. Phosphoserine; by FAM20C is present on residues Ser-367, Ser-377, and Ser-380. Basic and acidic residues-rich tracts occupy residues Glu-384 to Lys-415 and Asp-433 to Lys-455. Position 401 is a phosphotyrosine (Tyr-401). Phosphoserine is present on Ser-405. Residue Tyr-474 is modified to Sulfotyrosine. The interval Gly-475–Ala-512 is disordered. Positions Gln-490–Asp-503 are enriched in basic and acidic residues. A phosphoserine mark is found at Ser-533 and Ser-534. Tyr-566 is modified (sulfotyrosine). Ser-617 bears the Phosphoserine mark. Residues Asp-622–Lys-653 form a disordered region. Sulfotyrosine is present on Tyr-624. A phosphoserine mark is found at Ser-626 and Ser-631. The span at Gln-634–Lys-653 shows a compositional bias: basic and acidic residues.

It belongs to the chromogranin/secretogranin protein family. In terms of assembly, interacts with ITPR1 in the secretory granules. Post-translationally, extensively processed by limited proteolysis at conserved basic residues. Alternative processing are seen in different tissues. In terms of processing, O-glycosylated. Detected in cerebrospinal fluid and urine (at protein level). Expressed in the adrenal medulla, and in pheochromocytoma. Not expressed in liver.

It is found in the secreted. Functionally, secretogranin-1 is a neuroendocrine secretory granule protein, which may be the precursor for other biologically active peptides. The chain is Secretogranin-1 (CHGB) from Homo sapiens (Human).